A 383-amino-acid polypeptide reads, in one-letter code: S-adenosylmethionine synthase (383 aa).

Histidine 16 contributes to the ATP binding site. A Mg(2+)-binding site is contributed by aspartate 18. Glutamate 44 lines the K(+) pocket. Residues glutamate 57 and glutamine 98 each coordinate L-methionine. Positions 98–108 are flexible loop; the sequence is QSPDIAMGVDI. Residues 158 to 160, 226 to 227, aspartate 235, 241 to 242, alanine 258, and lysine 262 contribute to the ATP site; these read DQK, RF, and RK. Aspartate 235 provides a ligand contact to L-methionine. Lysine 266 contacts L-methionine.

This sequence belongs to the AdoMet synthase family. As to quaternary structure, homotetramer; dimer of dimers. It depends on Mg(2+) as a cofactor. K(+) serves as cofactor.

Its subcellular location is the cytoplasm. It carries out the reaction L-methionine + ATP + H2O = S-adenosyl-L-methionine + phosphate + diphosphate. It participates in amino-acid biosynthesis; S-adenosyl-L-methionine biosynthesis; S-adenosyl-L-methionine from L-methionine: step 1/1. Its function is as follows. Catalyzes the formation of S-adenosylmethionine (AdoMet) from methionine and ATP. The overall synthetic reaction is composed of two sequential steps, AdoMet formation and the subsequent tripolyphosphate hydrolysis which occurs prior to release of AdoMet from the enzyme. In Fusobacterium nucleatum subsp. nucleatum (strain ATCC 25586 / DSM 15643 / BCRC 10681 / CIP 101130 / JCM 8532 / KCTC 2640 / LMG 13131 / VPI 4355), this protein is S-adenosylmethionine synthase.